The following is an 882-amino-acid chain: Cadherin-1 (882 aa).

Positions 1–22 are cleaved as a signal peptide; that stretch reads MGPWSRSLSALLLLLQVSSWLC. A propeptide spanning residues 23 to 154 is cleaved from the precursor; sequence QEPEPCHPGF…SSSGLRRRKR (132 aa). The N-linked (GlcNAc...) asparagine glycan is linked to asparagine 144. Cadherin domains follow at residues 155–262, 263–375, 376–486, 487–593, and 594–697; these read DWVI…KPEF, TQEV…PPVF, NPTT…APIF, VPPE…DNAP, and IPEP…VCKK. Residues 155 to 709 are Extracellular-facing; it reads DWVIPPISCP…PIEAGLQIPA (555 aa). Ca(2+) is bound at residue aspartate 257. O-linked (Man...) serine glycosylation occurs at serine 280. The O-linked (Man...) threonine glycan is linked to threonine 285. Aspartate 288 lines the Ca(2+) pocket. 4 O-linked (Man...) threonine glycosylation sites follow: threonine 358, threonine 470, threonine 472, and threonine 509. N-linked (GlcNAc...) asparagine glycosylation is present at asparagine 558. O-linked (Man...) threonine glycosylation is found at threonine 576, threonine 578, and threonine 580. Residue asparagine 637 is glycosylated (N-linked (GlcNAc...) asparagine). The helical transmembrane segment at 710–730 threads the bilayer; the sequence is ILGILGGILALLILILLLLLF. Residues 731 to 882 are Cytoplasmic-facing; it reads LRRRAVVKEP…ADMYGGGEDD (152 aa). The segment at 747–767 is disordered; sequence DTRDNVYYYDEEGGGEEDQDF. Tyrosine 753, tyrosine 754, and tyrosine 755 each carry phosphotyrosine; by SRC. Acidic residues predominate over residues 755-767; that stretch reads YDEEGGGEEDQDF. Residues 758–769 form a required for binding CTNND1 and PSEN1 region; sequence EGGGEEDQDFDL. Phosphoserine occurs at positions 770, 793, 838, 840, and 846. Residues 811–882 form a required for binding alpha, beta and gamma catenins region; that stretch reads IDENLKAADT…ADMYGGGEDD (72 aa).

Homodimer; disulfide-linked. Component of an E-cadherin/ catenin adhesion complex composed of at least E-cadherin/CDH1, beta-catenin/CTNNB1 or gamma-catenin/JUP, and potentially alpha-catenin/CTNNA1; the complex is located to adherens junctions. Found in a complex composed of CDH1, RAP1A and PKP3; PKP3 acts as a scaffold protein within the complex, the complex is required for CDH1 localization to mature desmosome cell junctions. Interacts with the TRPV4 and CTNNB1 complex. Interacts with CTNND1. The stable association of CTNNA1 is controversial as CTNNA1 was shown not to bind to F-actin when assembled in the complex. Alternatively, the CTNNA1-containing complex may be linked to F-actin by other proteins such as LIMA1. Interaction with PSEN1, cleaves CDH1 resulting in the disassociation of cadherin-based adherens junctions (CAJs). Interacts with AJAP1 and DLGAP5. Interacts with TBC1D2. Interacts with LIMA1. Interacts with CAV1. Interacts with PIP5K1C. Interacts with RAB8B. Interacts with DDR1; this stabilizes CDH1 at the cell surface and inhibits its internalization. Interacts with RAPGEF2. Interacts with KLRG1. Forms a ternary complex composed of ADAM10, CADH1 and EPHA4; within the complex, CADH1 is cleaved by ADAM10 which disrupts adherens junctions. Interacts with SPEF1. Interacts with CTNNB1 and PKP2. Interacts with AMOTL2; the interaction may facilitate binding of radial actin fibers to cell junction complexes. Interacts with DSG3; the interaction is required for CDH1 localization to developing adherens junctions. During apoptosis or with calcium influx, cleaved by a membrane-bound metalloproteinase (ADAM10), PS1/gamma-secretase and caspase-3. Processing by the metalloproteinase, induced by calcium influx, causes disruption of cell-cell adhesion and the subsequent release of beta-catenin into the cytoplasm. The residual membrane-tethered cleavage product is rapidly degraded via an intracellular proteolytic pathway. Cleavage by caspase-3 releases the cytoplasmic tail resulting in disintegration of the actin microfilament system. The gamma-secretase-mediated cleavage promotes disassembly of adherens junctions. During development of the cochlear organ of Corti, cleavage by ADAM10 at adherens junctions promotes pillar cell separation. In terms of processing, N-glycosylation at Asn-637 is essential for expression, folding and trafficking. Addition of bisecting N-acetylglucosamine by MGAT3 modulates its cell membrane location. Post-translationally, ubiquitinated by a SCF complex containing SKP2, which requires prior phosphorylation by CK1/CSNK1A1. Ubiquitinated by CBLL1/HAKAI, requires prior phosphorylation at Tyr-754. O-glycosylated. O-manosylated by TMTC1, TMTC2, TMTC3 or TMTC4. Thr-285 and Thr-509 are O-mannosylated by TMTC2 or TMTC4 but not TMTC1 or TMTC3.

Its subcellular location is the cell junction. The protein localises to the adherens junction. The protein resides in the cell membrane. It is found in the endosome. It localises to the golgi apparatus. Its subcellular location is the trans-Golgi network. The protein localises to the cytoplasm. The protein resides in the desmosome. Cadherins are calcium-dependent cell adhesion proteins. They preferentially interact with themselves in a homophilic manner in connecting cells; cadherins may thus contribute to the sorting of heterogeneous cell types. CDH1 is involved in mechanisms regulating cell-cell adhesions, mobility and proliferation of epithelial cells. Promotes organization of radial actin fiber structure and cellular response to contractile forces, via its interaction with AMOTL2 which facilitates anchoring of radial actin fibers to CDH1 junction complexes at the cell membrane. Plays a role in the early stages of desmosome cell-cell junction formation via facilitating the recruitment of DSG2 and DSP to desmosome plaques. Has a potent invasive suppressor role. It is a ligand for integrin alpha-E/beta-7. Functionally, E-Cad/CTF2 promotes non-amyloidogenic degradation of Abeta precursors. Has a strong inhibitory effect on APP C99 and C83 production. This chain is Cadherin-1 (CDH1), found in Pongo abelii (Sumatran orangutan).